The sequence spans 304 residues: GTPase Era (304 aa).

The 176-residue stretch at 11–186 folds into the Era-type G domain; the sequence is YCGFIAIVGR…LRKGVHHFPE (176 aa). The tract at residues 19 to 26 is G1; it reads GRPNVGKS. Residue 19 to 26 coordinates GTP; that stretch reads GRPNVGKS. Positions 45 to 49 are G2; sequence QTTRH. The interval 66 to 69 is G3; sequence DTPG. GTP-binding positions include 66–70 and 128–131; these read DTPGL and NKVD. A G4 region spans residues 128 to 131; it reads NKVD. The tract at residues 158-160 is G5; sequence ISA. Positions 210–287 constitute a KH type-2 domain; the sequence is TGEELPYSVT…HLELWVKVKS (78 aa).

It belongs to the TRAFAC class TrmE-Era-EngA-EngB-Septin-like GTPase superfamily. Era GTPase family. As to quaternary structure, monomer.

It localises to the cytoplasm. It is found in the cell inner membrane. An essential GTPase that binds both GDP and GTP, with rapid nucleotide exchange. Plays a role in 16S rRNA processing and 30S ribosomal subunit biogenesis and possibly also in cell cycle regulation and energy metabolism. This Histophilus somni (strain 2336) (Haemophilus somnus) protein is GTPase Era.